A 427-amino-acid chain; its full sequence is Glutamate-1-semialdehyde 2,1-aminomutase 1 (427 aa).

Lys267 is modified (N6-(pyridoxal phosphate)lysine).

This sequence belongs to the class-III pyridoxal-phosphate-dependent aminotransferase family. HemL subfamily. Homodimer. It depends on pyridoxal 5'-phosphate as a cofactor.

The protein resides in the cytoplasm. It carries out the reaction (S)-4-amino-5-oxopentanoate = 5-aminolevulinate. Its pathway is porphyrin-containing compound metabolism; protoporphyrin-IX biosynthesis; 5-aminolevulinate from L-glutamyl-tRNA(Glu): step 2/2. In Macrococcus caseolyticus (strain JCSC5402) (Macrococcoides caseolyticum), this protein is Glutamate-1-semialdehyde 2,1-aminomutase 1.